A 572-amino-acid polypeptide reads, in one-letter code: Mitochondrial chaperone TCM62 (572 aa).

The N-terminal 16 residues, 1–16 (MLRNCLRKLGNHQTKC), are a transit peptide targeting the mitochondrion. The Mitochondrial matrix segment spans residues 17–471 (SVKTLHTPIY…KANEPNFMTK (455 aa)). The chain crosses the membrane as a helical span at residues 472–488 (VGINAVLSAVILPSEVA). Residues 489 to 572 (FKNAYGYNYY…VYKKPERHKA (84 aa)) lie on the Mitochondrial intermembrane side of the membrane.

The protein belongs to the chaperonin (HSP60) family. As to quaternary structure, forms a high molecular mass protein complex of approximately 850 kDa.

It is found in the mitochondrion inner membrane. Chaperone. Required for the assembly of succinate dehydrogenase subunits. Ensures mitochondrial gene expression at elevated temperatures and prevents heat-aggregation of the ribosomal subunit VAR1. This is Mitochondrial chaperone TCM62 (TCM62) from Saccharomyces cerevisiae (strain ATCC 204508 / S288c) (Baker's yeast).